We begin with the raw amino-acid sequence, 600 residues long: Monooxygenase ptmN (600 aa).

It belongs to the FMO family. It depends on FAD as a cofactor.

It functions in the pathway secondary metabolite biosynthesis. Its function is as follows. Monooxygenase; part of the gene cluster that mediates the biosynthesis of the indole diterpenes penitrems. The geranylgeranyl diphosphate (GGPP) synthase ptmG catalyzes the first step in penitrem biosynthesis via conversion of farnesyl pyrophosphate and isopentyl pyrophosphate into geranylgeranyl pyrophosphate (GGPP). Condensation of indole-3-glycerol phosphate with GGPP by the prenyl transferase ptmC then forms 3-geranylgeranylindole (3-GGI). Epoxidation by the FAD-dependent monooxygenase ptmM leads to a epoxidized-GGI that is substrate of the terpene cyclase ptmB for cyclization to yield paspaline. Paspaline is subsequently converted to 13-desoxypaxilline by the cytochrome P450 monooxygenase ptmP, the latter being then converted to paxilline by the cytochrome P450 monooxygenase ptmQ. Paxilline is converted to beta-paxitriol via C-10 ketoreduction by the short-chain dehydrogenase ptmH which can be monoprenylated at the C-20 by the indole diterpene prenyltransferase ptmD. A two-step elimination (acetylation and elimination) process performed by the O-acetyltransferase ptmV and ptmI leads to the production of the prenylated form of penijanthine. The FAD-linked oxidoreductase ptmO then converts the prenylated form of penijanthine into PC-M5 which is in turn transformed into PC-M4 by the aromatic dimethylallyltransferase ptmE. Five sequential oxidative transformations performed by the cytochrome P450 monooxygenases ptmK, ptmU, ptmL, ptmN and ptmJ yield the various penitrem compounds. PtmK, ptmU and ptmM are involved in the formation of the key bicyclic ring of penitrem C via the formation of the intermediates secopenitrem D and penitrem D. PtmL catalyzes the epoxidation of penitrem D and C to yield penitrem B and F, respectively. PtmJ catalyzes the last benzylic hydroxylation to convert penitrem B to prenitrem E and penitrem F to penitrem A. The sequence is that of Monooxygenase ptmN from Penicillium ochrochloron.